The sequence spans 314 residues: Probable manganese-dependent inorganic pyrophosphatase (314 aa).

His-7, Asp-11, Asp-13, Asp-72, His-94, and Asp-146 together coordinate Mn(2+).

This sequence belongs to the PPase class C family. Mn(2+) serves as cofactor.

It is found in the cytoplasm. The enzyme catalyses diphosphate + H2O = 2 phosphate + H(+). The protein is Probable manganese-dependent inorganic pyrophosphatase (ppaC) of Deinococcus radiodurans (strain ATCC 13939 / DSM 20539 / JCM 16871 / CCUG 27074 / LMG 4051 / NBRC 15346 / NCIMB 9279 / VKM B-1422 / R1).